Reading from the N-terminus, the 635-residue chain is MIHVTCNQEAFELPEGASAMDLANKMKQSHCFAGALINDQEKDLSTTLQDGDTVLFLTWDDPKGREIFLHTSAHILAQAVLRLWPSAQPTIGPVIDQGFYYDFANLSISEEDFPAIEAMAKTIAEEKFPISRQVFPDKEAALAYFSQNPFKAELIAELPEEVEISAYTQGEFLDLCRGPHLPSTAPVKAFKLLRTSSAYWKGDPSRESLIRIYGVSFPTTKELKEHLHQLEEAKKRDHRVLGTKLDLFSQQTCSAGMPFFHPRGMVVWNALVDYWKRLHQRAGYQQIQTPQLMNRELWEISGHWENYKENMYTLTVDEEDYAIKPMNCPGCMLYYKTQLHSYREFPLRIAEIGHVHRHELSGALSGLMRVRTFHQDDAHVFLTPEQVEEETLNILNLVSELYGTFGLEYHLELSTRPEQGTIGSDDLWELATKALKRALVKSQKPFIISPGEGAFYGPKIDIHVKDAINRTWQCGTIQLDMFLPERFDLKYTNAQGEKSTPIMLHRALFGSIERFLGILIEHFKGRFPLWLSPEHVRIITVADRHEARAQELAKHFSQMGIIVSVDSSNESVSKKIRNAQNMQVNYMITIGDKELETHLLAVRTRDNRVLNDIAVEQFSHVILEELRSLSLTPSL.

The region spanning Met1 to Thr58 is the TGS domain. The segment at Asp237 to Pro528 is catalytic. Zn(2+) is bound by residues Cys328, His379, and His505.

Belongs to the class-II aminoacyl-tRNA synthetase family. As to quaternary structure, homodimer. The cofactor is Zn(2+).

The protein resides in the cytoplasm. The catalysed reaction is tRNA(Thr) + L-threonine + ATP = L-threonyl-tRNA(Thr) + AMP + diphosphate + H(+). In terms of biological role, catalyzes the attachment of threonine to tRNA(Thr) in a two-step reaction: L-threonine is first activated by ATP to form Thr-AMP and then transferred to the acceptor end of tRNA(Thr). Also edits incorrectly charged L-seryl-tRNA(Thr). The protein is Threonine--tRNA ligase of Chlamydia trachomatis serovar A (strain ATCC VR-571B / DSM 19440 / HAR-13).